The chain runs to 372 residues: Putative isochorismate synthase MenF (372 aa).

The active-site Proton acceptor is the lysine 119. Glutamate 175 serves as the catalytic Proton donor. Positions 219 and 356 each coordinate Mg(2+).

It belongs to the isochorismate synthase family. It depends on Mg(2+) as a cofactor.

The catalysed reaction is chorismate = isochorismate. It participates in quinol/quinone metabolism; 1,4-dihydroxy-2-naphthoate biosynthesis; 1,4-dihydroxy-2-naphthoate from chorismate: step 1/7. Its pathway is quinol/quinone metabolism; menaquinone biosynthesis. In terms of biological role, catalyzes the conversion of chorismate to isochorismate. This is Putative isochorismate synthase MenF (menF) from Mycobacterium tuberculosis (strain CDC 1551 / Oshkosh).